A 202-amino-acid polypeptide reads, in one-letter code: Probable nicotinate-nucleotide adenylyltransferase (202 aa).

The protein belongs to the NadD family.

It catalyses the reaction nicotinate beta-D-ribonucleotide + ATP + H(+) = deamido-NAD(+) + diphosphate. Its pathway is cofactor biosynthesis; NAD(+) biosynthesis; deamido-NAD(+) from nicotinate D-ribonucleotide: step 1/1. Catalyzes the reversible adenylation of nicotinate mononucleotide (NaMN) to nicotinic acid adenine dinucleotide (NaAD). This is Probable nicotinate-nucleotide adenylyltransferase from Clostridium perfringens (strain 13 / Type A).